The following is a 399-amino-acid chain: Methylthioribose kinase (399 aa).

ATP is bound by residues asparagine 40, lysine 57, and 111–113 (EDL). Position 229 (aspartate 229) interacts with substrate. 246 to 248 (DAE) is a binding site for ATP. Arginine 344 contacts substrate.

The protein belongs to the methylthioribose kinase family. Homodimer.

It carries out the reaction 5-(methylsulfanyl)-D-ribose + ATP = 5-(methylsulfanyl)-alpha-D-ribose 1-phosphate + ADP + H(+). The protein operates within amino-acid biosynthesis; L-methionine biosynthesis via salvage pathway; S-methyl-5-thio-alpha-D-ribose 1-phosphate from S-methyl-5'-thioadenosine (hydrolase route): step 2/2. In terms of biological role, catalyzes the phosphorylation of methylthioribose into methylthioribose-1-phosphate. This chain is Methylthioribose kinase, found in Citrobacter koseri (strain ATCC BAA-895 / CDC 4225-83 / SGSC4696).